The primary structure comprises 87 residues: Small ribosomal subunit protein bS20 (87 aa).

The tract at residues methionine 1–alanine 23 is disordered.

The protein belongs to the bacterial ribosomal protein bS20 family.

Binds directly to 16S ribosomal RNA. The chain is Small ribosomal subunit protein bS20 from Oleidesulfovibrio alaskensis (strain ATCC BAA-1058 / DSM 17464 / G20) (Desulfovibrio alaskensis).